Reading from the N-terminus, the 82-residue chain is Small ribosomal subunit protein uS17 (82 aa).

It belongs to the universal ribosomal protein uS17 family. As to quaternary structure, part of the 30S ribosomal subunit.

In terms of biological role, one of the primary rRNA binding proteins, it binds specifically to the 5'-end of 16S ribosomal RNA. The sequence is that of Small ribosomal subunit protein uS17 from Thermosynechococcus vestitus (strain NIES-2133 / IAM M-273 / BP-1).